The sequence spans 344 residues: MSMTAQKALQRIVEHREILQDEMVQLMRQIMNSEVSGIMVAAILAGLRVKKETVGEIAGAATVMREFSRKVNVQDRTHLVDIVGTGGDGWHTFNISTCAMFVAAAAGAKVAKHGNRSVSSKSGSADVLEALGASIELQPLEVAEAIGCIGVGFMFAPIHHPVMQVVSPVRREMGVRTIFNILGPLTNPADAPNILMGVFDPDLVGIQVHVLHKLGAERALVVCGRDGMDELSLGTTTLVGELRGGRVCEYEVSPEDYGMAVSPISNLRVESSAESREMLLNVLAGKPGPALDVVALNAGAALYVAGVAQDIGHGVALAREVIFNGRARNILNQYVAFTRRPRNV.

Residues G84, 87-88, T92, 94-97, 112-120, and S124 each bind 5-phospho-alpha-D-ribose 1-diphosphate; these read GD, NIST, and KHGNRSVSS. G84 contacts anthranilate. Residue S96 participates in Mg(2+) binding. N115 is an anthranilate binding site. R170 contacts anthranilate. Residues D229 and E230 each contribute to the Mg(2+) site.

This sequence belongs to the anthranilate phosphoribosyltransferase family. Homodimer. The cofactor is Mg(2+).

It carries out the reaction N-(5-phospho-beta-D-ribosyl)anthranilate + diphosphate = 5-phospho-alpha-D-ribose 1-diphosphate + anthranilate. It participates in amino-acid biosynthesis; L-tryptophan biosynthesis; L-tryptophan from chorismate: step 2/5. Its function is as follows. Catalyzes the transfer of the phosphoribosyl group of 5-phosphorylribose-1-pyrophosphate (PRPP) to anthranilate to yield N-(5'-phosphoribosyl)-anthranilate (PRA). In Xylella fastidiosa (strain M23), this protein is Anthranilate phosphoribosyltransferase.